We begin with the raw amino-acid sequence, 264 residues long: Thymidylate synthase (264 aa).

Arg21 lines the dUMP pocket. His51 contacts (6R)-5,10-methylene-5,6,7,8-tetrahydrofolate. 126–127 (RR) serves as a coordination point for dUMP. Residue Cys146 is the Nucleophile of the active site. DUMP is bound by residues 166–169 (RSCD), Asn177, and 207–209 (HLY). Asp169 contacts (6R)-5,10-methylene-5,6,7,8-tetrahydrofolate. A (6R)-5,10-methylene-5,6,7,8-tetrahydrofolate-binding site is contributed by Ala263.

This sequence belongs to the thymidylate synthase family. Bacterial-type ThyA subfamily. As to quaternary structure, homodimer.

The protein localises to the cytoplasm. The enzyme catalyses dUMP + (6R)-5,10-methylene-5,6,7,8-tetrahydrofolate = 7,8-dihydrofolate + dTMP. The protein operates within pyrimidine metabolism; dTTP biosynthesis. In terms of biological role, catalyzes the reductive methylation of 2'-deoxyuridine-5'-monophosphate (dUMP) to 2'-deoxythymidine-5'-monophosphate (dTMP) while utilizing 5,10-methylenetetrahydrofolate (mTHF) as the methyl donor and reductant in the reaction, yielding dihydrofolate (DHF) as a by-product. This enzymatic reaction provides an intracellular de novo source of dTMP, an essential precursor for DNA biosynthesis. The chain is Thymidylate synthase from Buchnera aphidicola subsp. Baizongia pistaciae (strain Bp).